A 152-amino-acid polypeptide reads, in one-letter code: Ribonuclease HI (152 aa).

In terms of domain architecture, RNase H type-1 spans 1 to 142 (MDSKVVIYTD…ADKLAVQGRE (142 aa)). Positions 10, 48, 70, and 134 each coordinate Mg(2+).

Belongs to the RNase H family. In terms of assembly, monomer. Requires Mg(2+) as cofactor.

Its subcellular location is the cytoplasm. The enzyme catalyses Endonucleolytic cleavage to 5'-phosphomonoester.. Functionally, endonuclease that specifically degrades the RNA of RNA-DNA hybrids. The sequence is that of Ribonuclease HI (rnhA) from Rickettsia prowazekii (strain Madrid E).